Reading from the N-terminus, the 585-residue chain is MIKTQESLTLEDVAVEFSWEEWQLLDTAQKNLYRDVMVENYNHLVSLGYQTSKPDVLSKLAHGQEPWTTDAKIQNKNCPGIGKVDSHLQEHSPNQRLLKSVQQCNGQNTLRNIVHLSKTHFPIVQNHDTFDLYRKNLKSSLSLINQKRRHGINNPVEFIGGEKTLLHGKHERTHTKTRFSENAKCIHTKFQVFKHQRTQKIEKPHACIECEQTFLRKSQLIYHENICIQENPGSGQCEKLSRSVLFTKHLKTNTTDKICIPNEYRKGSTVKSSLITHQQTHTEEKSYMCSECGKGFTMKRYLIAHQRTHSGEKPYVCKECGKGFTVKSNLIVHQRTHTGEKPYICSECGKGFTMKRYLVVHQRTHTGEKPYMCSECGKGFTVKSNLIVHQRSHTGEKSYICSECGKGFTVKRTLVIHQRTHTGEKSYICNECGKGFTTKRTLIIHQRTHTGEKPYECNECGKAFSQKICLIQHERCHTGKTPFVCTECGKSYSHKYGLITHQRIHTGEKPYECNECGKAFTTKSVLNVHQRTHTGERPYGCSDCEKAFSHLSNLVKHKKMHTREMGRISQVENSCNGESQLLPYK.

The region spanning 8–79 (LTLEDVAVEF…DAKIQNKNCP (72 aa)) is the KRAB domain. The C2H2-type 1; atypical zinc-finger motif lies at 205–227 (HACIECEQTFLRKSQLIYHENIC). The C2H2-type 2; degenerate zinc-finger motif lies at 257-281 (KICIPNEYRKGSTVKSSLITHQQTH). 10 consecutive C2H2-type zinc fingers follow at residues 287–309 (YMCSECGKGFTMKRYLIAHQRTH), 315–337 (YVCKECGKGFTVKSNLIVHQRTH), 343–365 (YICSECGKGFTMKRYLVVHQRTH), 371–393 (YMCSECGKGFTVKSNLIVHQRSH), 399–421 (YICSECGKGFTVKRTLVIHQRTH), 427–449 (YICNECGKGFTTKRTLIIHQRTH), 455–477 (YECNECGKAFSQKICLIQHERCH), 483–505 (FVCTECGKSYSHKYGLITHQRIH), 511–533 (YECNECGKAFTTKSVLNVHQRTH), and 539–561 (YGCSDCEKAFSHLSNLVKHKKMH).

The protein belongs to the krueppel C2H2-type zinc-finger protein family.

It localises to the nucleus. In terms of biological role, may be involved in transcriptional regulation. In Homo sapiens (Human), this protein is Zinc finger protein 614 (ZNF614).